The primary structure comprises 76 residues: Large ribosomal subunit protein bL31 (76 aa).

The protein belongs to the bacterial ribosomal protein bL31 family. Type A subfamily. In terms of assembly, part of the 50S ribosomal subunit.

Its function is as follows. Binds the 23S rRNA. The polypeptide is Large ribosomal subunit protein bL31 (rpmE) (Pelagibacter ubique (strain HTCC1062)).